Here is a 1001-residue protein sequence, read N- to C-terminus: Serine/threonine-protein kinase TAO1 (1001 aa).

Ser9 bears the Phosphoserine mark. The Protein kinase domain maps to Phe28–Val281. Residues Ile34 to Val42 and Lys57 contribute to the ATP site. The Proton acceptor role is filled by Asp151. 2 disordered regions span residues Pro324–Glu380 and Glu404–His431. The span at Ser350 to Ser370 shows a compositional bias: low complexity. Phosphoserine occurs at positions 421 and 445. The stretch at Ser458 to Met651 forms a coiled coil. The tract at residues Lys567–Lys587 is disordered. The segment covering Pro577–Lys587 has biased composition (basic and acidic residues). At Thr669 the chain carries Phosphothreonine. The stretch at Lys754–Ala877 forms a coiled coil. The disordered stretch occupies residues Pro905–Thr1001. A compositionally biased stretch (polar residues) spans Gly906–Thr915. Ser965 bears the Phosphoserine mark. Positions Gly975–Thr1001 are enriched in polar residues.

It belongs to the protein kinase superfamily. STE Ser/Thr protein kinase family. STE20 subfamily. As to quaternary structure, self-associates. Interacts with MAP2K3. Interacts with SPRED1. Interacts with TESK1; the interaction inhibits TAOK1 kinase activity. Interacts with MAP3K7. Proteolytically processed by caspase-3 (CASP3). Post-translationally, autophosphorylated. Phosphorylated by ATM in response to DNA damage. Phosphorylated by LRRK2.

It localises to the cytoplasm. It catalyses the reaction L-seryl-[protein] + ATP = O-phospho-L-seryl-[protein] + ADP + H(+). The enzyme catalyses L-threonyl-[protein] + ATP = O-phospho-L-threonyl-[protein] + ADP + H(+). Its activity is regulated as follows. Serine/threonine-protein kinase activity is inhibited by SPRED1. Its function is as follows. Serine/threonine-protein kinase involved in various processes such as p38/MAPK14 stress-activated MAPK cascade, DNA damage response and regulation of cytoskeleton stability. Phosphorylates MAP2K3, MAP2K6 and MARK2. Acts as an activator of the p38/MAPK14 stress-activated MAPK cascade by mediating phosphorylation and subsequent activation of the upstream MAP2K3 and MAP2K6 kinases. Involved in G-protein coupled receptor signaling to p38/MAPK14. In response to DNA damage, involved in the G2/M transition DNA damage checkpoint by activating the p38/MAPK14 stress-activated MAPK cascade, probably by mediating phosphorylation of MAP2K3 and MAP2K6. Acts as a regulator of cytoskeleton stability by phosphorylating 'Thr-208' of MARK2, leading to activate MARK2 kinase activity and subsequent phosphorylation and detachment of MAPT/TAU from microtubules. Also acts as a regulator of apoptosis: regulates apoptotic morphological changes, including cell contraction, membrane blebbing and apoptotic bodies formation via activation of the MAPK8/JNK cascade. During fetal development, it plays an essential role in the regulation of neuronal differentiation and migration to the cortical plate. In Rattus norvegicus (Rat), this protein is Serine/threonine-protein kinase TAO1 (Taok1).